A 119-amino-acid polypeptide reads, in one-letter code: DNA-directed RNA polymerase subunit omega (119 aa).

Belongs to the RNA polymerase subunit omega family. As to quaternary structure, the RNAP catalytic core consists of 2 alpha, 1 beta, 1 beta' and 1 omega subunit. When a sigma factor is associated with the core the holoenzyme is formed, which can initiate transcription.

The enzyme catalyses RNA(n) + a ribonucleoside 5'-triphosphate = RNA(n+1) + diphosphate. Functionally, promotes RNA polymerase assembly. Latches the N- and C-terminal regions of the beta' subunit thereby facilitating its interaction with the beta and alpha subunits. The protein is DNA-directed RNA polymerase subunit omega (rpoZ) of Caulobacter vibrioides (strain ATCC 19089 / CIP 103742 / CB 15) (Caulobacter crescentus).